A 200-amino-acid chain; its full sequence is Large ribosomal subunit protein uL4 (200 aa).

The interval S42–A69 is disordered.

It belongs to the universal ribosomal protein uL4 family. As to quaternary structure, part of the 50S ribosomal subunit.

Functionally, one of the primary rRNA binding proteins, this protein initially binds near the 5'-end of the 23S rRNA. It is important during the early stages of 50S assembly. It makes multiple contacts with different domains of the 23S rRNA in the assembled 50S subunit and ribosome. Its function is as follows. Forms part of the polypeptide exit tunnel. The chain is Large ribosomal subunit protein uL4 from Alcanivorax borkumensis (strain ATCC 700651 / DSM 11573 / NCIMB 13689 / SK2).